The primary structure comprises 765 residues: Multifunctional tryptophan biosynthesis protein (765 aa).

Positions 2–196 (ATLLIDNYDS…LSLRGGNWDE (195 aa)) constitute a Glutamine amidotransferase type-1 domain. 53–55 (GPG) contacts L-glutamine. The Nucleophile; for GATase activity role is filled by cysteine 81. L-glutamine contacts are provided by residues glutamine 85 and 131–132 (SL). Active-site for GATase activity residues include histidine 170 and glutamate 172. The indole-3-glycerol phosphate synthase stretch occupies residues 231-494 (TILSRIYAQR…NLKEFVAELL (264 aa)). The segment at 512–765 (QVKICGISSV…VEKAKSINLQ (254 aa)) is N-(5'-phosphoribosyl)anthranilate isomerase.

It carries out the reaction N-(5-phospho-beta-D-ribosyl)anthranilate = 1-(2-carboxyphenylamino)-1-deoxy-D-ribulose 5-phosphate. The enzyme catalyses 1-(2-carboxyphenylamino)-1-deoxy-D-ribulose 5-phosphate + H(+) = (1S,2R)-1-C-(indol-3-yl)glycerol 3-phosphate + CO2 + H2O. The catalysed reaction is chorismate + L-glutamine = anthranilate + pyruvate + L-glutamate + H(+). It participates in amino-acid biosynthesis; L-tryptophan biosynthesis; L-tryptophan from chorismate: step 1/5. The protein operates within amino-acid biosynthesis; L-tryptophan biosynthesis; L-tryptophan from chorismate: step 3/5. Its pathway is amino-acid biosynthesis; L-tryptophan biosynthesis; L-tryptophan from chorismate: step 4/5. Its function is as follows. Trifunctional enzyme bearing the Gln amidotransferase (GATase) domain of anthranilate synthase, indole-glycerolphosphate synthase, and phosphoribosylanthranilate isomerase activities. The sequence is that of Multifunctional tryptophan biosynthesis protein (trp1) from Phycomyces blakesleeanus.